Here is a 493-residue protein sequence, read N- to C-terminus: Alpha-amylase-related protein (493 aa).

A signal peptide spans 1–19 (MFKFALTLTLCLAGSLSLA). Gln-20 carries the pyrrolidone carboxylic acid modification. The cysteines at positions 47 and 103 are disulfide-linked. Residues Asn-117, Gln-168, and Asp-177 each coordinate Ca(2+). An intrachain disulfide couples Cys-156 to Cys-170. Arg-205 provides a ligand contact to chloride. The active-site Nucleophile is the Asp-207. Residue His-211 coordinates Ca(2+). The active-site Proton donor is Glu-244. Asn-307 and Arg-342 together coordinate chloride. Intrachain disulfides connect Cys-375/Cys-381, Cys-417/Cys-440, and Cys-447/Cys-459.

This sequence belongs to the glycosyl hydrolase 13 family. In terms of assembly, monomer. Ca(2+) is required as a cofactor. Chloride serves as cofactor. As to expression, midgut and fat body.

It localises to the secreted. It carries out the reaction Endohydrolysis of (1-&gt;4)-alpha-D-glucosidic linkages in polysaccharides containing three or more (1-&gt;4)-alpha-linked D-glucose units.. The sequence is that of Alpha-amylase-related protein (Amyrel) from Drosophila melanogaster (Fruit fly).